A 56-amino-acid chain; its full sequence is Ovomucoid (56 aa).

Residues 6-56 form the Kazal-like domain; that stretch reads VDCSEYPKPDCTTEERPLCGSDNKTYGNKCNFCNAVVESNGTLTLSHFGKC. Cystine bridges form between cysteine 8/cysteine 38, cysteine 16/cysteine 35, and cysteine 24/cysteine 56. Asparagine 45 carries N-linked (GlcNAc...) asparagine glycosylation.

The protein localises to the secreted. This chain is Ovomucoid, found in Francolinus pondicerianus (Grey francolin).